The chain runs to 160 residues: Major pollen allergen Bet v 1-J (160 aa).

4 residues coordinate brassinolide: Lys-55, Tyr-82, Tyr-84, and Asn-101. Hydrophobic ligand pocket regions lie at residues 116-118 (KIN) and 133-141 (QIKASKEMG).

Belongs to the BetVI family. As to expression, pollen.

The protein localises to the cytoplasm. May be a general steroid carrier protein. In Betula pendula (European white birch), this protein is Major pollen allergen Bet v 1-J.